Reading from the N-terminus, the 312-residue chain is Acetyl-coenzyme A carboxylase carboxyl transferase subunit alpha (312 aa).

Residues 25–286 form the CoA carboxyltransferase C-terminal domain; that stretch reads GDDSAVEILK…GNYIIEKLNE (262 aa).

The protein belongs to the AccA family. As to quaternary structure, acetyl-CoA carboxylase is a heterohexamer composed of biotin carboxyl carrier protein (AccB), biotin carboxylase (AccC) and two subunits each of ACCase subunit alpha (AccA) and ACCase subunit beta (AccD).

It localises to the cytoplasm. The catalysed reaction is N(6)-carboxybiotinyl-L-lysyl-[protein] + acetyl-CoA = N(6)-biotinyl-L-lysyl-[protein] + malonyl-CoA. The protein operates within lipid metabolism; malonyl-CoA biosynthesis; malonyl-CoA from acetyl-CoA: step 1/1. Its function is as follows. Component of the acetyl coenzyme A carboxylase (ACC) complex. First, biotin carboxylase catalyzes the carboxylation of biotin on its carrier protein (BCCP) and then the CO(2) group is transferred by the carboxyltransferase to acetyl-CoA to form malonyl-CoA. This is Acetyl-coenzyme A carboxylase carboxyl transferase subunit alpha from Campylobacter hominis (strain ATCC BAA-381 / DSM 21671 / CCUG 45161 / LMG 19568 / NCTC 13146 / CH001A).